Here is a 490-residue protein sequence, read N- to C-terminus: UDP-N-acetylmuramate--L-alanine ligase (490 aa).

130 to 136 (GTHGKTT) contributes to the ATP binding site.

Belongs to the MurCDEF family.

The protein localises to the cytoplasm. It catalyses the reaction UDP-N-acetyl-alpha-D-muramate + L-alanine + ATP = UDP-N-acetyl-alpha-D-muramoyl-L-alanine + ADP + phosphate + H(+). Its pathway is cell wall biogenesis; peptidoglycan biosynthesis. In terms of biological role, cell wall formation. This chain is UDP-N-acetylmuramate--L-alanine ligase, found in Idiomarina loihiensis (strain ATCC BAA-735 / DSM 15497 / L2-TR).